The following is a 305-amino-acid chain: tRNA pseudouridine synthase B (305 aa).

The active-site Nucleophile is Asp-48.

The protein belongs to the pseudouridine synthase TruB family. Type 1 subfamily.

It catalyses the reaction uridine(55) in tRNA = pseudouridine(55) in tRNA. Responsible for synthesis of pseudouridine from uracil-55 in the psi GC loop of transfer RNAs. The polypeptide is tRNA pseudouridine synthase B (Mannheimia succiniciproducens (strain KCTC 0769BP / MBEL55E)).